Consider the following 776-residue polypeptide: Meiotic expression up-regulated protein 1/2 (776 aa).

5 coiled-coil regions span residues 87–122 (YVLKVAEEKIEKLLKENGTLKNEEKCLRMQIVAQEE), 173–227 (FSEL…DLKE), 265–307 (YKVE…NDEE), 362–430 (KMSQ…RNNS), and 496–595 (INNQ…NTEL).

The polypeptide is Meiotic expression up-regulated protein 1/2 (meu1) (Schizosaccharomyces pombe (strain 972 / ATCC 24843) (Fission yeast)).